The following is a 138-amino-acid chain: Small ribosomal subunit protein uS11c (138 aa).

The segment at 1–22 is disordered; sequence MTKPIPRIGSRRSGRIGSRKAG. Basic residues predominate over residues 9-22; it reads GSRRSGRIGSRKAG.

The protein belongs to the universal ribosomal protein uS11 family. In terms of assembly, part of the 30S ribosomal subunit.

Its subcellular location is the plastid. The protein resides in the chloroplast. The chain is Small ribosomal subunit protein uS11c from Piper cenocladum (Ant piper).